Consider the following 299-residue polypeptide: 33 kDa chaperonin (299 aa).

2 disulfide bridges follow: C240/C242 and C273/C276.

It belongs to the HSP33 family. Post-translationally, under oxidizing conditions two disulfide bonds are formed involving the reactive cysteines. Under reducing conditions zinc is bound to the reactive cysteines and the protein is inactive.

It is found in the cytoplasm. Its function is as follows. Redox regulated molecular chaperone. Protects both thermally unfolding and oxidatively damaged proteins from irreversible aggregation. Plays an important role in the bacterial defense system toward oxidative stress. In Thermosynechococcus vestitus (strain NIES-2133 / IAM M-273 / BP-1), this protein is 33 kDa chaperonin.